The primary structure comprises 221 residues: Proline-rich protein 20A (221 aa).

Disordered regions lie at residues 1 to 103 and 137 to 174; these read MEEP…QRQG and SLSE…GPQA. The segment covering 42–53 has biased composition (low complexity); that stretch reads PAQPAQPAKPIA. The span at 63-72 shows a compositional bias: pro residues; sequence PARPESPPPA. A compositionally biased stretch (basic residues) spans 75–93; sequence GRRRGGSRRPGRGRGRRAG.

The protein belongs to the PRR20 family.

The chain is Proline-rich protein 20A (PRR20A) from Homo sapiens (Human).